Consider the following 570-residue polypeptide: Periplasmic trehalase (570 aa).

Positions 1-34 (MIPPEIRRSVLLQKAIKLALAGTLLTFASFSATA) are cleaved as a signal peptide. Substrate is bound by residues R159, 166–167 (WD), N203, 212–214 (RSQ), 284–286 (RPE), and G317. Residues D319 and E503 each act as proton donor/acceptor in the active site. E518 contributes to the substrate binding site. The interval 544-570 (KPCDSVPSTRPASLSATPTKTPSAATQ) is disordered. Low complexity predominate over residues 554–570 (PASLSATPTKTPSAATQ).

Belongs to the glycosyl hydrolase 37 family. Monomer.

It localises to the periplasm. The catalysed reaction is alpha,alpha-trehalose + H2O = alpha-D-glucose + beta-D-glucose. Provides the cells with the ability to utilize trehalose at high osmolarity by splitting it into glucose molecules that can subsequently be taken up by the phosphotransferase-mediated uptake system. The sequence is that of Periplasmic trehalase from Salmonella newport (strain SL254).